The sequence spans 509 residues: tRNA (guanine(37)-N(1))-methyltransferase (509 aa).

The transit peptide at 1 to 57 (MVLWILWRPFGFSRRLLKLERHSITESKSLIPLAWTSLTQTLSESPGIFLLGQRKRF) directs the protein to the mitochondrion. S-adenosyl-L-methionine is bound by residues His-289, 327–328 (DL), 355–356 (DG), and Asn-387. The disordered stretch occupies residues 478 to 509 (TKNPENHEDPPLKRQRTAEAFSDEKTQIASNT).

The protein belongs to the class I-like SAM-binding methyltransferase superfamily. TRM5/TYW2 family. Monomer.

It is found in the mitochondrion matrix. The protein localises to the nucleus. The protein resides in the cytoplasm. The catalysed reaction is guanosine(37) in tRNA + S-adenosyl-L-methionine = N(1)-methylguanosine(37) in tRNA + S-adenosyl-L-homocysteine + H(+). In terms of biological role, involved in mitochondrial tRNA methylation. Specifically methylates the N1 position of guanosine-37 in various tRNAs. Methylation is not dependent on the nature of the nucleoside 5' of the target nucleoside. This is the first step in the biosynthesis of wybutosine (yW), a modified base adjacent to the anticodon of tRNAs and required for accurate decoding. The chain is tRNA (guanine(37)-N(1))-methyltransferase from Macaca mulatta (Rhesus macaque).